Reading from the N-terminus, the 509-residue chain is Dihydrolipoyl dehydrogenase, mitochondrial (509 aa).

The N-terminal 35 residues, 1 to 35, are a transit peptide targeting the mitochondrion; that stretch reads MQSWSRVYCSLAKRGHFNRISHGLQGLSAVPLRTY. Position 66 is an N6-acetyllysine; alternate (Lys-66). At Lys-66 the chain carries N6-succinyllysine; alternate. FAD is bound by residues 71–80 and Lys-89; that span reads EKNETLGGTC. The cysteines at positions 80 and 85 are disulfide-linked. 4 positions are modified to N6-acetyllysine; alternate: Lys-104, Lys-122, Lys-132, and Lys-143. An N6-succinyllysine; alternate mark is found at Lys-104, Lys-122, Lys-132, and Lys-143. Gly-154 is a binding site for FAD. N6-succinyllysine is present on residues Lys-159 and Lys-166. 183 to 185 contributes to the FAD binding site; sequence TGS. Residues 220–227 and Glu-243 contribute to the NAD(+) site; that span reads GAGVIGVE. N6-succinyllysine is present on residues Lys-273 and Lys-277. Val-278 contacts NAD(+). Ser-285 and Ser-297 each carry phosphoserine. Gly-314 contributes to the NAD(+) binding site. An N6-acetyllysine modification is found at Lys-346. Residues Asp-355 and 361-364 contribute to the FAD site; that span reads MLAH. Lys-410 bears the N6-acetyllysine; alternate mark. An N6-succinyllysine; alternate modification is found at Lys-410. N6-acetyllysine is present on residues Lys-417 and Lys-420. N6-succinyllysine is present on Lys-430. His-487 functions as the Proton acceptor in the catalytic mechanism. At Ser-502 the chain carries Phosphoserine. An N6-acetyllysine; alternate modification is found at Lys-505. Lys-505 carries the post-translational modification N6-succinyllysine; alternate.

Belongs to the class-I pyridine nucleotide-disulfide oxidoreductase family. As to quaternary structure, homodimer. Part of the multimeric pyruvate dehydrogenase complex that contains multiple copies of pyruvate dehydrogenase (subunits PDHA (PDHA1 or PDHA2) and PDHB, E1), dihydrolipoamide acetyltransferase (DLAT, E2) and lipoamide dehydrogenase (DLD, E3). These subunits are bound to an inner core composed of about 48 DLAT and 12 PDHX molecules (by non covalent bonds). The 2-oxoglutarate dehydrogenase complex is composed of OGDH (2-oxoglutarate dehydrogenase; E1), DLST (dihydrolipoamide succinyltransferase; E2), DLD (dihydrolipoamide dehydrogenase; E3) and the assembly factor KGD4. It contains multiple copies of the three enzymatic components (E1, E2 and E3). In the nucleus, the 2-oxoglutarate dehydrogenase complex associates with KAT2A. Interacts with PDHX. Requires FAD as cofactor. Post-translationally, tyrosine phosphorylated.

Its subcellular location is the mitochondrion matrix. The protein localises to the nucleus. It localises to the cell projection. It is found in the cilium. The protein resides in the flagellum. Its subcellular location is the cytoplasmic vesicle. The protein localises to the secretory vesicle. It localises to the acrosome. The catalysed reaction is N(6)-[(R)-dihydrolipoyl]-L-lysyl-[protein] + NAD(+) = N(6)-[(R)-lipoyl]-L-lysyl-[protein] + NADH + H(+). Its function is as follows. Lipoamide dehydrogenase is a component of the glycine cleavage system as well as an E3 component of three alpha-ketoacid dehydrogenase complexes (pyruvate-, alpha-ketoglutarate-, and branched-chain amino acid-dehydrogenase complex). The 2-oxoglutarate dehydrogenase complex is mainly active in the mitochondrion. A fraction of the 2-oxoglutarate dehydrogenase complex also localizes in the nucleus and is required for lysine succinylation of histones: associates with KAT2A on chromatin and provides succinyl-CoA to histone succinyltransferase KAT2A. In monomeric form may have additional moonlighting function as serine protease. Involved in the hyperactivation of spermatazoa during capacitation and in the spermatazoal acrosome reaction. This Macaca fascicularis (Crab-eating macaque) protein is Dihydrolipoyl dehydrogenase, mitochondrial (DLD).